A 335-amino-acid polypeptide reads, in one-letter code: Karyogamy protein KAR4 (335 aa).

Residues 1 to 25 (MAFQDPTYDQNKSRHINNSHLQGPN) are disordered. A compositionally biased stretch (polar residues) spans 16 to 25 (INNSHLQGPN).

Belongs to the MT-A70-like family. In terms of assembly, component of the MIS (mRNA N6-methyladenosine (m6A) methylation) complex, at least composed of IME4, KAR4, MUM2, SLZ1, and VIR1. Interacts with VIR1.

It localises to the nucleus. It is found in the cytoplasm. In terms of biological role, component of the MIS complex, a complex that mediates N6-methyladenosine (m6A) methylation of meiotic mRNAs and is required for initiation of meiosis, progression through the meiotic divisions and sporulation. May assist STE12 in the pheromone-dependent expression of KAR3 and CIK1. This Saccharomyces cerevisiae (strain ATCC 204508 / S288c) (Baker's yeast) protein is Karyogamy protein KAR4 (KAR4).